The chain runs to 293 residues: Ribosomal protein L11 methyltransferase (293 aa).

4 residues coordinate S-adenosyl-L-methionine: T145, G166, D188, and N230.

Belongs to the methyltransferase superfamily. PrmA family.

The protein localises to the cytoplasm. It carries out the reaction L-lysyl-[protein] + 3 S-adenosyl-L-methionine = N(6),N(6),N(6)-trimethyl-L-lysyl-[protein] + 3 S-adenosyl-L-homocysteine + 3 H(+). In terms of biological role, methylates ribosomal protein L11. The protein is Ribosomal protein L11 methyltransferase of Escherichia coli O139:H28 (strain E24377A / ETEC).